A 331-amino-acid polypeptide reads, in one-letter code: Ribose operon repressor (331 aa).

The 56-residue stretch at 1-56 folds into the HTH lacI-type domain; that stretch reads MTTIRDVAKHAKVSVATVSRVLNKKGYVSKEAEEAVLQAIKELNYQPSSVARSLYH. The segment at residues 4–23 is a DNA-binding region (H-T-H motif); that stretch reads IRDVAKHAKVSVATVSRVLN.

In terms of biological role, transcriptional repressor for the ribose rbsDACBK operon. This Halalkalibacterium halodurans (strain ATCC BAA-125 / DSM 18197 / FERM 7344 / JCM 9153 / C-125) (Bacillus halodurans) protein is Ribose operon repressor (rbsR).